A 250-amino-acid polypeptide reads, in one-letter code: 2,3-bisphosphoglycerate-dependent phosphoglycerate mutase (250 aa).

Substrate is bound by residues 10-17, 23-24, Arg62, 89-92, Lys100, 116-117, and 185-186; these read RHGESQWN, TG, ERHY, RR, and GN. His11 serves as the catalytic Tele-phosphohistidine intermediate. Residue Glu89 is the Proton donor/acceptor of the active site.

It belongs to the phosphoglycerate mutase family. BPG-dependent PGAM subfamily. As to quaternary structure, homodimer.

The catalysed reaction is (2R)-2-phosphoglycerate = (2R)-3-phosphoglycerate. The protein operates within carbohydrate degradation; glycolysis; pyruvate from D-glyceraldehyde 3-phosphate: step 3/5. In terms of biological role, catalyzes the interconversion of 2-phosphoglycerate and 3-phosphoglycerate. The sequence is that of 2,3-bisphosphoglycerate-dependent phosphoglycerate mutase from Klebsiella pneumoniae (strain 342).